The sequence spans 239 residues: Prolyl hydroxylase EGLN3 (239 aa).

Residues 62–73 are beta(2)beta(3) 'finger-like' loop; sequence AGPRAGVSKRHL. The tract at residues 88 to 104 is required for interaction with ADRB2; the sequence is CEAINFLLSLIDRLVLY. Residues 116-214 enclose the Fe2OG dioxygenase domain; sequence ERSKAMVACY…RYAMTVWYFD (99 aa). The Fe cation site is built by His-135, Asp-137, and His-196. 2-oxoglutarate is bound at residue Arg-205.

Interacts with ADRB2; the interaction hydroxylates ADRB2 facilitating its ubiquitination by the VHL-E3 ligase complex. Interacts with PKM; the interaction hydroxylates PKM in hypoxia. Interacts with WDR83; the interaction leads to almost complete elimination of HIF-mediated reporter activity. Interacts with BCL2 (via its BH4 domain); the interaction disrupts the BAX-BCL4 complex inhibiting the anti-apoptotic activity of BCL2. Interacts with LIMD1, WTIP and AJUBA. It depends on Fe(2+) as a cofactor. The cofactor is L-ascorbate. Post-translationally, ubiquitinated by SIAH1 and/or SIAH2 in response to the unfolded protein response (UPR), leading to its degradation. In terms of tissue distribution, highly expressed in cardiac and smooth muscle. Also high expression in brain, skeletal muscle and kidney. Low levels in lung.

The protein resides in the nucleus. It localises to the cytoplasm. The catalysed reaction is L-prolyl-[protein] + 2-oxoglutarate + O2 = trans-4-hydroxy-L-prolyl-[protein] + succinate + CO2. The enzyme catalyses L-prolyl-[hypoxia-inducible factor alpha subunit] + 2-oxoglutarate + O2 = trans-4-hydroxy-L-prolyl-[hypoxia-inducible factor alpha subunit] + succinate + CO2. Its function is as follows. Prolyl hydroxylase that mediates hydroxylation of proline residues in target proteins, such as PKM, TELO2, ATF4 and HIF1A. Target proteins are preferentially recognized via a LXXLAP motif. Cellular oxygen sensor that catalyzes, under normoxic conditions, the post-translational formation of 4-hydroxyproline in hypoxia-inducible factor (HIF) alpha proteins. Hydroxylates a specific proline found in each of the oxygen-dependent degradation (ODD) domains (N-terminal, NODD, and C-terminal, CODD) of HIF1A. Also hydroxylates HIF2A. Has a preference for the CODD site for both HIF1A and HIF2A. Hydroxylation on the NODD site by EGLN3 appears to require prior hydroxylation on the CODD site. Hydroxylated HIFs are then targeted for proteasomal degradation via the von Hippel-Lindau ubiquitination complex. Under hypoxic conditions, the hydroxylation reaction is attenuated allowing HIFs to escape degradation resulting in their translocation to the nucleus, heterodimerization with HIF1B, and increased expression of hypoxy-inducible genes. ELGN3 is the most important isozyme in limiting physiological activation of HIFs (particularly HIF2A) in hypoxia. Also hydroxylates PKM in hypoxia, limiting glycolysis. Under normoxia, hydroxylates and regulates the stability of ADRB2. Regulator of cardiomyocyte and neuronal apoptosis. In cardiomyocytes, inhibits the anti-apoptotic effect of BCL2 by disrupting the BAX-BCL2 complex. In neurons, has a NGF-induced proapoptotic effect, probably through regulating CASP3 activity. Also essential for hypoxic regulation of neutrophilic inflammation. Plays a crucial role in DNA damage response (DDR) by hydroxylating TELO2, promoting its interaction with ATR which is required for activation of the ATR/CHK1/p53 pathway. Also mediates hydroxylation of ATF4, leading to decreased protein stability of ATF4. This Mus musculus (Mouse) protein is Prolyl hydroxylase EGLN3.